The chain runs to 384 residues: PqqA peptide cyclase (384 aa).

Residues 14–230 enclose the Radical SAM core domain; it reads IPAPVGLLAE…EAARERLKGQ (217 aa). [4Fe-4S] cluster is bound by residues Cys28, Cys32, and Cys35.

Belongs to the radical SAM superfamily. PqqE family. As to quaternary structure, interacts with PqqD. The interaction is necessary for activity of PqqE. The cofactor is [4Fe-4S] cluster.

The catalysed reaction is [PQQ precursor protein] + S-adenosyl-L-methionine = E-Y cross-linked-[PQQ precursor protein] + 5'-deoxyadenosine + L-methionine + H(+). It functions in the pathway cofactor biosynthesis; pyrroloquinoline quinone biosynthesis. Functionally, catalyzes the cross-linking of a glutamate residue and a tyrosine residue in the PqqA protein as part of the biosynthesis of pyrroloquinoline quinone (PQQ). The protein is PqqA peptide cyclase of Methylorubrum extorquens (strain CM4 / NCIMB 13688) (Methylobacterium extorquens).